The primary structure comprises 152 residues: Deoxyuridine 5'-triphosphate nucleotidohydrolase (152 aa).

Substrate contacts are provided by residues 70–72 (RSG), N83, 87–89 (LID), and M97.

The protein belongs to the dUTPase family. Mg(2+) is required as a cofactor.

The enzyme catalyses dUTP + H2O = dUMP + diphosphate + H(+). It functions in the pathway pyrimidine metabolism; dUMP biosynthesis; dUMP from dCTP (dUTP route): step 2/2. Functionally, this enzyme is involved in nucleotide metabolism: it produces dUMP, the immediate precursor of thymidine nucleotides and it decreases the intracellular concentration of dUTP so that uracil cannot be incorporated into DNA. The chain is Deoxyuridine 5'-triphosphate nucleotidohydrolase from Buchnera aphidicola subsp. Baizongia pistaciae (strain Bp).